The following is a 292-amino-acid chain: Xyloglucan endotransglucosylase/hydrolase protein 2 (292 aa).

An N-terminal signal peptide occupies residues 1–24 (MNRIRYCFELVSVLFLMFTANARA). Positions 25–219 (RGRGAIDFDV…WAYAPFKAQY (195 aa)) constitute a GH16 domain. The active-site Nucleophile is glutamate 106. The active-site Proton donor is the glutamate 110. Residues glutamate 110, 123–125 (QTN), 133–135 (GRE), 198–199 (NW), and glycine 203 contribute to the xyloglucan site. 2 disulfide bridges follow: cysteine 227–cysteine 239 and cysteine 275–cysteine 288. Arginine 280 is a xyloglucan binding site.

This sequence belongs to the glycosyl hydrolase 16 family. XTH group 1 subfamily. In terms of processing, contains at least one intrachain disulfide bond essential for its enzymatic activity.

Its subcellular location is the secreted. It localises to the cell wall. It is found in the extracellular space. The protein localises to the apoplast. The catalysed reaction is breaks a beta-(1-&gt;4) bond in the backbone of a xyloglucan and transfers the xyloglucanyl segment on to O-4 of the non-reducing terminal glucose residue of an acceptor, which can be a xyloglucan or an oligosaccharide of xyloglucan.. May catalyze xyloglucan endohydrolysis (XEH) and/or endotransglycosylation (XET). Cleaves and religates xyloglucan polymers, an essential constituent of the primary cell wall, and thereby participates in cell wall construction of growing tissues. The protein is Xyloglucan endotransglucosylase/hydrolase protein 2 (XTH2) of Arabidopsis thaliana (Mouse-ear cress).